A 589-amino-acid chain; its full sequence is Protein NRT1/ PTR FAMILY 4.7 (589 aa).

12 consecutive transmembrane segments (helical) span residues 59–79 (GMLAASFVLVVEVLENLAFLA), 105–125 (AFMGTAFFLALLGGFLADAFF), 127–147 (TFHIYLVSAAIEFLGLMVLTV), 160–180 (VFLFVGLYLVALGVGGIKGSL), 201–221 (FFFNYFIFSLSCGALIAVTVV), 230–250 (WSYGFGVSTAAILISVPVFLA), 344–364 (IVIKILPIFMSTIMLNCCLAQ), 383–403 (FTVPPAALPVFPVVFMMILAP), 429–449 (IGTGLVLSIVAMAVAALVETK), 471–491 (LPITFLWVAIQYVFLGSADLF), 520–540 (LAMGYYFSSVLVSAVNFVTGL), and 560–580 (FYWLMCVLSGINFLHYLFWAS).

It belongs to the major facilitator superfamily. Proton-dependent oligopeptide transporter (POT/PTR) (TC 2.A.17) family. As to expression, expressed in flowers.

It localises to the membrane. This is Protein NRT1/ PTR FAMILY 4.7 (NPF4.7) from Arabidopsis thaliana (Mouse-ear cress).